The sequence spans 415 residues: Phakinin (415 aa).

Residues 1–26 form a disordered region; that stretch reads MSTRRVVVDAPAGASSSMPLQRHKAS. An N-acetylserine modification is found at Ser2. The segment at 2–114 is head; it reads STRRVVVDAP…LGAVEDLGGC (113 aa). Phosphoserine occurs at positions 26, 32, and 35. Residue Thr53 is modified to Phosphothreonine. Phosphoserine is present on residues Ser90 and Ser100. One can recognise an IF rod domain in the interval 104–415; the sequence is DLGAVEDLGG…HALLDREESS (312 aa). Coiled coils occupy residues 115–144, 199–248, and 295–395; these read LVEY…ESKA, RKAA…VKML, and QAKQ…LSHK. Positions 396–415 are tail; sequence CQLQRDVASYHALLDREESS.

Belongs to the intermediate filament family. In terms of assembly, part of a complex required for lens intermediate filament formation composed of BFSP1, BFSP2 and CRYAA. Found in a complex composed of PPL (via C-terminal linker domain), BFSP1 and BFSP2 in the retinal lens. Within the complex interacts with PPL (via C-terminal linker domain) and with BFSP1. Identified in a complex that contains VIM, EZR, AHNAK, BFSP1, BFSP2, ANK2, PLEC, PRX and spectrin. Interacts with LGSN. Interacts with VIM. In terms of tissue distribution, abundantly expressed in both the inner and outer cortex of the retina, expressed at a lower level in the nucleus of the retina (at protein level). Detected in eye lens fiber cells (at protein level).

It localises to the cell membrane. Its subcellular location is the cytoplasm. It is found in the cytoskeleton. The protein resides in the cell cortex. Functionally, required for the correct formation of lens intermediate filaments as part of a complex composed of BFSP1, BFSP2 and CRYAA. Plays a role in maintenance of retinal lens optical clarity. This Bos taurus (Bovine) protein is Phakinin (BFSP2).